The primary structure comprises 279 residues: Oxygen-dependent coproporphyrinogen-III oxidase (279 aa).

Ser-102 lines the substrate pocket. Positions 106 and 116 each coordinate a divalent metal cation. The Proton donor role is filled by His-116. A substrate-binding site is contributed by 118–120 (NTR). 2 residues coordinate a divalent metal cation: His-149 and His-179. Positions 244 to 279 (YVEFNLLYDRGTKFGLMTDGNVEAILMSLPPEVKFN) are important for dimerization.

The protein belongs to the aerobic coproporphyrinogen-III oxidase family. Homodimer. The cofactor is a divalent metal cation.

The protein localises to the cytoplasm. The enzyme catalyses coproporphyrinogen III + O2 + 2 H(+) = protoporphyrinogen IX + 2 CO2 + 2 H2O. Its pathway is porphyrin-containing compound metabolism; protoporphyrin-IX biosynthesis; protoporphyrinogen-IX from coproporphyrinogen-III (O2 route): step 1/1. Its function is as follows. Involved in the heme biosynthesis. Catalyzes the aerobic oxidative decarboxylation of propionate groups of rings A and B of coproporphyrinogen-III to yield the vinyl groups in protoporphyrinogen-IX. In Rickettsia felis (strain ATCC VR-1525 / URRWXCal2) (Rickettsia azadi), this protein is Oxygen-dependent coproporphyrinogen-III oxidase.